The sequence spans 264 residues: Apolipoprotein A-I (264 aa).

The first 18 residues, 1-18, serve as a signal peptide directing secretion; that stretch reads MKAVVLTVAVFFLTGSQA. 2 repeat units span residues 67-88 and 89-110. The 10 X approximate tandem repeats stretch occupies residues 67–264; that stretch reads LKLLDNWDSL…DEATKKLTTQ (198 aa). A Methionine sulfoxide modification is found at methionine 109. One copy of the 3; half-length repeat lies at 111–121; sequence KDLEEVKLKVQ. 3 tandem repeats follow at residues 122-143, 144-165, and 166-187. The 7; truncated repeat unit spans residues 188 to 207; it reads PYSDELRQRLAARLEALKES. The stretch at 208 to 229 is repeat 8; sequence SSLADYQAKATEHLSALGEKAK. The stretch at 230 to 240 is one 9; half-length repeat; it reads PALEDLRQGLL. The stretch at 241 to 264 is repeat 10; that stretch reads PVLENLKMSFWSAVDEATKKLTTQ.

This sequence belongs to the apolipoprotein A1/A4/E family. Homodimer. Interacts with APOA1BP and CLU. Component of a sperm activating protein complex (SPAP), consisting of APOA1, an immunoglobulin heavy chain, an immunoglobulin light chain and albumin. Interacts with NDRG1. Interacts with SCGB3A2. Interacts with NAXE and YJEFN3. In terms of processing, glycosylated. Post-translationally, palmitoylated. Phosphorylation sites are present in the extracellular medium.

The protein resides in the secreted. Its function is as follows. Participates in the reverse transport of cholesterol from tissues to the liver for excretion by promoting cholesterol efflux from tissues and by acting as a cofactor for the lecithin cholesterol acyltransferase (LCAT). As part of the SPAP complex, activates spermatozoa motility. This is Apolipoprotein A-I (ApoA1) from Marmota monax (Woodchuck).